We begin with the raw amino-acid sequence, 197 residues long: Imidazoleglycerol-phosphate dehydratase (197 aa).

Belongs to the imidazoleglycerol-phosphate dehydratase family.

It localises to the cytoplasm. The enzyme catalyses D-erythro-1-(imidazol-4-yl)glycerol 3-phosphate = 3-(imidazol-4-yl)-2-oxopropyl phosphate + H2O. It participates in amino-acid biosynthesis; L-histidine biosynthesis; L-histidine from 5-phospho-alpha-D-ribose 1-diphosphate: step 6/9. The protein is Imidazoleglycerol-phosphate dehydratase of Streptomyces avermitilis (strain ATCC 31267 / DSM 46492 / JCM 5070 / NBRC 14893 / NCIMB 12804 / NRRL 8165 / MA-4680).